The primary structure comprises 428 residues: Glutamate-1-semialdehyde 2,1-aminomutase (428 aa).

Lys267 is subject to N6-(pyridoxal phosphate)lysine.

The protein belongs to the class-III pyridoxal-phosphate-dependent aminotransferase family. HemL subfamily. In terms of assembly, homodimer. The cofactor is pyridoxal 5'-phosphate.

The protein localises to the cytoplasm. The enzyme catalyses (S)-4-amino-5-oxopentanoate = 5-aminolevulinate. The protein operates within porphyrin-containing compound metabolism; protoporphyrin-IX biosynthesis; 5-aminolevulinate from L-glutamyl-tRNA(Glu): step 2/2. This is Glutamate-1-semialdehyde 2,1-aminomutase from Flavobacterium johnsoniae (strain ATCC 17061 / DSM 2064 / JCM 8514 / BCRC 14874 / CCUG 350202 / NBRC 14942 / NCIMB 11054 / UW101) (Cytophaga johnsonae).